The primary structure comprises 678 residues: NADPH--cytochrome P450 reductase (678 aa).

At 1 to 21 (MADSNMDAGTTTSEMVAEEVS) the chain is on the lumenal side. Residues 22–42 (LFSTTDVILFSLIVGVMTYWF) traverse the membrane as a helical segment. Residues 43–678 (LFRKKKEEVP…KGRYSLDVWS (636 aa)) lie on the Cytoplasmic side of the membrane. The residue at position 63 (S63) is a Phosphoserine. The Flavodoxin-like domain maps to 80–224 (IIVFYGSQTG…DFITWREQFW (145 aa)). FMN contacts are provided by residues 86 to 91 (SQTGTA), 138 to 141 (ATYG), 173 to 182 (LGNKTYEHFN), and D208. Residues 279-521 (KNPFLAVVTT…YVRKSQFRLP (243 aa)) form the FAD-binding FR-type domain. R298 serves as a coordination point for NADP(+). FAD is bound by residues R424, 454-457 (RYYS), 472-474 (CAV), Y478, and 488-491 (GVAT). Residues T535, 596-597 (SR), 602-606 (KVYVQ), and D639 contribute to the NADP(+) site. An FAD-binding site is contributed by W677.

This sequence belongs to the NADPH--cytochrome P450 reductase family. The protein in the N-terminal section; belongs to the flavodoxin family. It in the C-terminal section; belongs to the flavoprotein pyridine nucleotide cytochrome reductase family. It depends on FAD as a cofactor. The cofactor is FMN.

It is found in the endoplasmic reticulum membrane. It carries out the reaction 2 oxidized [cytochrome P450] + NADPH = 2 reduced [cytochrome P450] + NADP(+) + H(+). This enzyme is required for electron transfer from NADP to cytochrome P450 in microsomes. It can also provide electron transfer to heme oxygenase and cytochrome B5. The chain is NADPH--cytochrome P450 reductase from Bos taurus (Bovine).